Consider the following 438-residue polypeptide: GTPase Der (438 aa).

2 consecutive EngA-type G domains span residues 2–164 (HKVA…PEDD) and 173–343 (IRIS…EKWQ). Residues 8 to 15 (GRPNVGKS), 55 to 59 (DTGGL), 116 to 119 (NKID), 179 to 186 (GRPNVGKS), 226 to 230 (DTAGI), and 288 to 291 (NKWD) each bind GTP. A KH-like domain is found at 344–428 (SRIGTSELNR…PVRLKWKEKG (85 aa)).

It belongs to the TRAFAC class TrmE-Era-EngA-EngB-Septin-like GTPase superfamily. EngA (Der) GTPase family. Associates with the 50S ribosomal subunit.

GTPase that plays an essential role in the late steps of ribosome biogenesis. This Deinococcus radiodurans (strain ATCC 13939 / DSM 20539 / JCM 16871 / CCUG 27074 / LMG 4051 / NBRC 15346 / NCIMB 9279 / VKM B-1422 / R1) protein is GTPase Der.